The primary structure comprises 358 residues: tRNA N6-adenosine threonylcarbamoyltransferase (358 aa).

2 residues coordinate Fe cation: His111 and His115. Substrate contacts are provided by residues 146–150 (LVSGG), Asp179, Gly192, and Asn294. Asp322 lines the Fe cation pocket.

Belongs to the KAE1 / TsaD family. Fe(2+) is required as a cofactor.

Its subcellular location is the cytoplasm. It catalyses the reaction L-threonylcarbamoyladenylate + adenosine(37) in tRNA = N(6)-L-threonylcarbamoyladenosine(37) in tRNA + AMP + H(+). In terms of biological role, required for the formation of a threonylcarbamoyl group on adenosine at position 37 (t(6)A37) in tRNAs that read codons beginning with adenine. Is involved in the transfer of the threonylcarbamoyl moiety of threonylcarbamoyl-AMP (TC-AMP) to the N6 group of A37, together with TsaE and TsaB. TsaD likely plays a direct catalytic role in this reaction. The sequence is that of tRNA N6-adenosine threonylcarbamoyltransferase from Helicobacter hepaticus (strain ATCC 51449 / 3B1).